A 1216-amino-acid chain; its full sequence is AF4/FMR2 family member 1 (1216 aa).

Disordered regions lie at residues 1–52, 68–104, 116–139, 152–217, 244–275, and 352–728; these read MAAH…KGDE, KEFLSSKSHPHRLDGSEDRPGKPRYPLGHDRGNGAAS, IHTSAPGSRPVGNISHSPKMAQPR, PRLT…VSSK, AVTSLGSAPPQPPCQTFPPPPLPSKSAAMQQK, and SWPP…RTSG. 2 stretches are compositionally biased toward basic and acidic residues: residues 9–35 and 78–99; these read NEDRNLLRIREKERRNQEAHQEKEAFP and HRLDGSEDRPGKPRYPLGHDRG. Over residues 166–182 the composition is skewed to basic and acidic residues; the sequence is RKCDRRAEGDSAPERKL. Ser-183, Ser-191, and Ser-197 each carry phosphoserine. The segment covering 207–217 has biased composition (low complexity); that stretch reads SKAHSSGVSSK. Positions 252–266 are enriched in pro residues; sequence PPQPPCQTFPPPPLP. Residues 383–406 show a composition bias toward polar residues; the sequence is PATQSQKQYDTPSKTHPNPQQGTS. Over residues 408 to 424 the composition is skewed to acidic residues; it reads LEDDLQLSDSEDSDTEQ. Pro residues predominate over residues 429 to 438; sequence PPSPPAPPSA. Over residues 457–484 the composition is skewed to acidic residues; the sequence is ESSESDSSSDSESESSSSDSEEEEENEP. Residue Lys-682 is modified to N6-acetyllysine. Low complexity predominate over residues 710–728; the sequence is SQGPSHSSRGSSGSVRTSG. 2 positions are modified to phosphoserine: Ser-755 and Ser-760. 2 disordered regions span residues 777–969 and 1094–1125; these read RIPQ…RQQA and APSPCTARSTGVPSPLSPMPSPASSVGSQSSA. Basic and acidic residues predominate over residues 789-808; sequence RKAEDKQLSAGKKQDSETKS. 4 stretches are compositionally biased toward low complexity: residues 824-846, 867-886, 902-915, and 1115-1125; these read KKSTVTRDTNWISRRASSSSSHT, PPASASSVSSSSSSQKPSRP, PPRSASSTKSSSTD, and PASSVGSQSSA.

It belongs to the AF4 family. Component of the super elongation complex (SEC), at least composed of EAF1, EAF2, CDK9, MLLT3/AF9, AFF (AFF1 or AFF4), the P-TEFb complex and ELL (ELL, ELL2 or ELL3).

The protein resides in the nucleus. The sequence is that of AF4/FMR2 family member 1 (Aff1) from Mus musculus (Mouse).